The primary structure comprises 2641 residues: CCR4-NOT transcription complex subunit let-711 (2641 aa).

Positions 660–664 match the LXXLL motif; it reads LSELL. Disordered stretches follow at residues 771–887, 936–963, 1197–1221, 1518–1565, and 2034–2054; these read SGRS…QNAQ, TQRQNSNSGWHAAPAPQRPSGPPTPQQQ, EGGRHTPVGSAQAGSASSTPTPAAA, QSKI…SQGA, and GMNNAMNNGAGNAAHHHAGLQ. 3 stretches are compositionally biased toward low complexity: residues 774–795, 802–839, and 853–877; these read SSSVSSGGHVQQSSGSQPQQQQ, LPPSGVVPVQQQPQQPPSLQQQHSQQSLPTPPTTSQQQ, and PAQFAPQPMFPPQAQAQHQHQHMMG. Over residues 951 to 960 the composition is skewed to pro residues; sequence PQRPSGPPTP. Over residues 1205–1221 the composition is skewed to low complexity; the sequence is GSAQAGSASSTPTPAAA. A compositionally biased stretch (low complexity) spans 2034–2046; the sequence is GMNNAMNNGAGNA. The short motif at 2341-2345 is the LXXLL element; sequence LRVLL. The segment at 2609–2641 is disordered; that stretch reads AQGSQPQAQPDGAPGPLGNNTGAANQQQNPNTN.

The protein belongs to the CNOT1 family. In terms of assembly, component of the CCR4-NOT complex at least composed of ccf-1, ccr-4 and let-711, which is required for germ cell development in hermaphrodites. Within the complex interacts with ccf-1 and ccr-4; the interactions are direct. As to expression, highly expressed in the germline of hermaphrodites.

It is found in the nucleus. Functionally, scaffolding component of the CCR4-NOT complex which is one of the major cellular mRNA deadenylases and is linked to various cellular processes including bulk mRNA degradation, miRNA-mediated repression, translational repression during translational initiation and general transcription regulation. Positively regulates the accumulation of the CCR4-NOT complex component ccr-1. Within the complex promotes germ cell development and fertility in hermaphrodites. Additional complex functions may be a consequence of its influence on mRNA expression. Its scaffolding function implies its interaction with the catalytic complex module and diverse RNA-binding proteins mediating the complex recruitment to selected mRNA 3'UTRs. Mediates the recruitment of the CCR4-NOT complex to miRNA targets and to the RISC complex. Acts as a transcriptional repressor. Represses the ligand-dependent transcriptional activation by nuclear receptors. In embryos, plays a role in female pronucleus and mitotic spindle positioning during the first cleavage divisions after fertilization. This may partly be through negatively regulating the accumulation of zyg-9 at the centrosome. Negatively regulates the formation of long astral microtubules in developing embryos. Required for the stabilization and degradation of maternal mRNAs such as nos-2 in somatic blastomeres. This Caenorhabditis elegans protein is CCR4-NOT transcription complex subunit let-711.